A 267-amino-acid chain; its full sequence is MEMO1 family protein aq_890 (267 aa).

This sequence belongs to the MEMO1 family.

The protein is MEMO1 family protein aq_890 of Aquifex aeolicus (strain VF5).